A 180-amino-acid chain; its full sequence is Large ribosomal subunit protein uL6 (180 aa).

The protein belongs to the universal ribosomal protein uL6 family. Part of the 50S ribosomal subunit.

In terms of biological role, this protein binds to the 23S rRNA, and is important in its secondary structure. It is located near the subunit interface in the base of the L7/L12 stalk, and near the tRNA binding site of the peptidyltransferase center. In Picosynechococcus sp. (strain ATCC 27264 / PCC 7002 / PR-6) (Agmenellum quadruplicatum), this protein is Large ribosomal subunit protein uL6.